The chain runs to 263 residues: Probable elongation factor 1-beta/1-delta 2 (263 aa).

Residue Ser2 is modified to N-acetylserine. A disordered region spans residues Gln112 to Lys153. Positions Ala133–Glu150 are enriched in acidic residues.

It belongs to the EF-1-beta/EF-1-delta family. As to quaternary structure, EF-1 is composed of 4 subunits: alpha, beta, delta, and gamma.

EF-1-beta and EF-1-delta stimulate the exchange of GDP bound to EF-1-alpha to GTP. This is Probable elongation factor 1-beta/1-delta 2 from Caenorhabditis elegans.